The sequence spans 378 residues: Erythronate-4-phosphate dehydrogenase (378 aa).

Residues Ser-45 and Thr-66 each contribute to the substrate site. 2 residues coordinate NAD(+): Asp-146 and Thr-175. Arg-208 is an active-site residue. Asp-232 contributes to the NAD(+) binding site. The active site involves Glu-237. The active-site Proton donor is the His-254. Gly-257 contacts NAD(+). Tyr-258 contributes to the substrate binding site.

It belongs to the D-isomer specific 2-hydroxyacid dehydrogenase family. PdxB subfamily. In terms of assembly, homodimer.

The protein resides in the cytoplasm. It carries out the reaction 4-phospho-D-erythronate + NAD(+) = (R)-3-hydroxy-2-oxo-4-phosphooxybutanoate + NADH + H(+). Its pathway is cofactor biosynthesis; pyridoxine 5'-phosphate biosynthesis; pyridoxine 5'-phosphate from D-erythrose 4-phosphate: step 2/5. In terms of biological role, catalyzes the oxidation of erythronate-4-phosphate to 3-hydroxy-2-oxo-4-phosphonooxybutanoate. This is Erythronate-4-phosphate dehydrogenase from Escherichia coli O45:K1 (strain S88 / ExPEC).